The primary structure comprises 409 residues: Immunity-related GTPase family M protein 1 (409 aa).

In terms of domain architecture, IRG-type G spans 75–251 (IPVSIFVTGD…PKLRDTLHKD (177 aa)). Residues 84 to 91 (DSGNGMSS), 109 to 113 (TGVVR), and 191 to 193 (KLD) contribute to the GTP site. Residue Ser-202 is modified to Phosphoserine. 232 to 234 (SSL) lines the GTP pocket. Lys-270 participates in a covalent cross-link: Glycyl lysine isopeptide (Lys-Gly) (interchain with G-Cter in ubiquitin). An alpha-K amphipathic helix region spans residues 350–374 (KLRLMTCAIVNAFFRLLRFLPCVCC).

This sequence belongs to the TRAFAC class dynamin-like GTPase superfamily. IRG family. Interacts with ULK1; promoting the coassembly of ULK1 and BECN1. Interacts with BECN1; enhancing BECN1-interacting partners and influencing the composition of the BECN1 complex. Interacts with ATG16L1. Interacts with NOD2; promoting Irgm1 'Lys-63'-linked polyubiquitination, which is required for interactions with the core autophagy factors. Interacts with STX17; promoting STX17 recruitment to autophagosomes. Interacts with ATG8 proteins (GABARAP, GABARAPL1, GABARAPL2, MAP1LC3A, MAP1LC3B and MAP1LC3C); promoting STX17 recruitment to autophagosomes. Interacts with TFEB; promoting association between TFEB and PPP3CB and TFEB dephosphorylation. Interacts with PPP3CB; promoting association between TFEB and PPP3CB and TFEB dephosphorylation. Interacts with NLRP3; preventing NLRP3 inflammasome assembly and promoting SQSTM1/p62-dependent autophagic degradation of NLRP3. Interacts with CGAS; promoting SQSTM1/p62-dependent autophagic degradation of CGAS. Interacts with RIGI/RIG-I; promoting SQSTM1/p62-dependent autophagic degradation of RIGI/RIG-I. Interacts with NOD1; promoting SQSTM1/p62-dependent autophagic degradation of RIGI/RIG-I. Interacts with NOD2; promoting SQSTM1/p62-dependent autophagic degradation of RIGI/RIG-I. Interacts with RIPK2; promoting SQSTM1/p62-dependent autophagic degradation of RIGI/RIG-I. Interacts with PIK3CA. Palmitoylated on C-terminal Cys residues. Palmitoylation, together with the alpha-K amphipathic helix, which binds phosphatidylinositol, mediate binding to membranes. Post-translationally, ubiquitinated via 'Lys-63'-linked polyubiquitination in a NOD2-dependent process. 'Lys-63'-linked polyubiquitination is required for interactions with the core autophagy factors. Ubiquitination at Lys-270 by the DCX(WDR77) complex, also named CLR4(WDR77) complex, in intestinal cells, leading to its degradation by the proteasome. In terms of tissue distribution, expressed in lung and primary macrophages.

Its subcellular location is the golgi apparatus membrane. The protein localises to the cell membrane. It localises to the cytoplasmic vesicle. The protein resides in the phagosome membrane. It is found in the autophagosome membrane. Its subcellular location is the lysosome membrane. The protein localises to the late endosome membrane. It localises to the mitochondrion membrane. The protein resides in the lipid droplet. It is found in the cell projection. Its subcellular location is the phagocytic cup. It carries out the reaction GTP + H2O = GDP + phosphate + H(+). Its function is as follows. Immunity-related GTPase that plays important roles in innate immunity and inflammatory response. Acts as a dynamin-like protein that binds to intracellular membranes and promotes remodeling and trafficking of those membranes. Required for clearance of acute protozoan and bacterial infections by interacting with autophagy and lysosome regulatory proteins, thereby promoting the fusion of phagosomes with lysosomes for efficient degradation of cargo including microbes. Regulates selective autophagy, including xenophagy and mitophagy, both directly and indirectly. Directly regulates autophagy by acting as a molecular adapter that promotes the coassembly of the core autophagy machinery to mediate antimicrobial defense: Irgm1 (1) activates AMPK, which in turn phosphorylates ULK1 and BECN1 to induce autophagy, (2) promotes the coassembly of ULK1 and BECN1, enhancing BECN1-interacting partners and (3) influences the composition of the BECN1 complex, by competing with the negative regulators BCL2 and RUBCN, to trigger autophagy. Also activates autophagy by promoting recruitment of STX17 to autophagosomes. In collaboration with ATG8 proteins, regulate lysosomal biogenesis, a fundamental process for any autophagic pathway, by promoting TFEB dephosphorylation. Also modulates autophagy by assisting with autophagosome formation and preventing lysosomal deacidification. Regulates autophagy by affecting mitochondrial fusion and fission. Also involved in M1 macrophage activation for the production of proinflammatory cytokines. While activating autophagy, acts as a key negative regulator of the inflammatory and interferon responses both by (1) promoting mitophagy and (2) mediating autophagy-dependent degradation of effectors of the inflammatory response. Promotes degradation of damaged and IFNG/IFN-gamma-stressed mitochondria via mitophagy, preventing cytosolic release of ligands that activate inflammation. Negatively regulates interferon-signaling in hematopoietic stem cells, preserving hematopoietic stem cell number and function. Promotes expansion of activated CD4(+) T-cells by inhibiting IFNG/IFN-gamma signaling, thereby preventing Ifng-mediated cell death of CD4(+) T-cells. Acts as a suppressor of inflammation by promoting recruitment of inflammation effectors, such as CGAS, RIGI/RIG-I and NLRP3, to autophagosome membranes, leading to their SQSTM1/p62-dependent autophagic degradation. Also directly inhibits assembly of the NLRP3 inflammasome by preventing the association between NLRP3 and PYCARD. Acts as a negative regulator of antiviral innate immune response by suppressing the RIPK2-dependent pro-inflammatory response: mediates recruitment of RIPosomes, composed of RIPK2 and NOD1 or NOD2, to autophagosome membranes, promoting their SQSTM1/p62-dependent autophagic degradation. This chain is Immunity-related GTPase family M protein 1, found in Mus musculus (Mouse).